The chain runs to 449 residues: Hyaluronidase (449 aa).

A signal peptide spans 1 to 23; it reads MYHLWIKCLAAWIFLKRFNGVHV. Cystine bridges form between Cys-47-Cys-340 and Cys-211-Cys-227. 2 N-linked (GlcNAc...) asparagine glycosylation sites follow: Asn-67 and Asn-103. Glu-135 serves as the catalytic Proton donor. The N-linked (GlcNAc...) asparagine glycan is linked to Asn-153. N-linked (GlcNAc...) asparagine glycosylation is present at Asn-357. 3 disulfides stabilise this stretch: Cys-365-Cys-376, Cys-370-Cys-427, and Cys-429-Cys-438. An N-linked (GlcNAc...) asparagine glycan is attached at Asn-401. The region spanning 427–438 is the EGF-like domain; that stretch reads CQCYQGWQGLYC.

This sequence belongs to the glycosyl hydrolase 56 family. Monomer. In terms of tissue distribution, expressed by the venom gland.

The protein localises to the secreted. The catalysed reaction is Random hydrolysis of (1-&gt;4)-linkages between N-acetyl-beta-D-glucosamine and D-glucuronate residues in hyaluronate.. In terms of biological role, snake venom endo-hyaluronidase that degrades hyaluronan to smaller oligosaccharide fragments. In venom, it is not toxic by itself, but increases the diffusion of other venom proteins by degrading the extracellular matrix. In addition, it displays antiedematogenic activity. The protein is Hyaluronidase of Echis ocellatus (Ocellated saw-scaled viper).